The chain runs to 362 residues: MERIVVTLGERSYPITIASGLFNEPASFLPLKSGEQVMLVTNETLAPLYLDKVRGVLEQAGVNVDSVILPDGEQYKSLAVLDTVFTALLQKPHGRDTTLVALGGGVVGDLTGFAAASYQRGVRFIQVPTTLLSQVDSSVGGKTAANHPLGKNMIGAFYQPASVVVDLDCLKTLPPRELVSGLAEVIKYGIILDGAFFNWLEENLDALLRLDGPAMAYCIRRCCELKAEVVAADERETGLRALLNLGHTFGHAIEAEMGYGNWLHGEAVAAGMVMAARTSERLGQFSSAETQRIITLLKRAGLPVNGPREMSAQAYLPHMLRDKKVLAGEIRLILPLAIGKSEVRSGVSHELVLNAIADCQSA.

Residues 71 to 76, 105 to 109, 129 to 130, Lys-142, Lys-151, and 169 to 172 contribute to the NAD(+) site; these read DGEQYK, GVVGD, TT, and CLKT. Zn(2+) contacts are provided by Glu-184, His-247, and His-264.

The protein belongs to the sugar phosphate cyclases superfamily. Dehydroquinate synthase family. Co(2+) serves as cofactor. The cofactor is Zn(2+). Requires NAD(+) as cofactor.

It localises to the cytoplasm. It catalyses the reaction 7-phospho-2-dehydro-3-deoxy-D-arabino-heptonate = 3-dehydroquinate + phosphate. It participates in metabolic intermediate biosynthesis; chorismate biosynthesis; chorismate from D-erythrose 4-phosphate and phosphoenolpyruvate: step 2/7. In terms of biological role, catalyzes the conversion of 3-deoxy-D-arabino-heptulosonate 7-phosphate (DAHP) to dehydroquinate (DHQ). This Shigella boydii serotype 18 (strain CDC 3083-94 / BS512) protein is 3-dehydroquinate synthase.